We begin with the raw amino-acid sequence, 347 residues long: Uroporphyrinogen decarboxylase (347 aa).

Residues 24 to 28 (RQAGR), Asp-74, Tyr-145, Ser-200, and His-315 contribute to the substrate site.

This sequence belongs to the uroporphyrinogen decarboxylase family. Homodimer.

The protein localises to the cytoplasm. The enzyme catalyses uroporphyrinogen III + 4 H(+) = coproporphyrinogen III + 4 CO2. The protein operates within porphyrin-containing compound metabolism; protoporphyrin-IX biosynthesis; coproporphyrinogen-III from 5-aminolevulinate: step 4/4. Catalyzes the decarboxylation of four acetate groups of uroporphyrinogen-III to yield coproporphyrinogen-III. The sequence is that of Uroporphyrinogen decarboxylase from Hydrogenobaculum sp. (strain Y04AAS1).